A 331-amino-acid polypeptide reads, in one-letter code: Cysteine and histidine-rich domain-containing protein 1 (331 aa).

Residue A2 is modified to N-acetylalanine. An interaction with PPP5C region spans residues 2–77 (ALLCYNRGCG…KPPEPVKPEV (76 aa)). Zn(2+) contacts are provided by C5, C10, C24, H27, C42, and C43. CHORD domains are found at residues 5-64 (CYNR…KGRH) and 157-216 (CKNG…RGKH). T47 bears the Phosphothreonine mark. A Phosphoserine modification is found at S51. Positions 59, 64, 157, 162, 176, 179, 194, 195, 211, and 216 each coordinate Zn(2+). Positions 62 to 82 (GRHNSEKPPEPVKPEVKTTEK) are disordered. Residues 64–82 (HNSEKPPEPVKPEVKTTEK) show a composition bias toward basic and acidic residues. The interval 65 to 316 (NSEKPPEPVK…AEPMQWASLE (252 aa)) is interaction with HSP90AA1 and HSP90AB1. In terms of domain architecture, CS spans 227–316 (VVPCRHDWHQ…AEPMQWASLE (90 aa)).

Interacts with HSP90AA1, HSP90AB1, PPP5C, ROCK1 and ROCK2.

In terms of biological role, regulates centrosome duplication, probably by inhibiting the kinase activity of ROCK2. Proposed to act as co-chaperone for HSP90. May play a role in the regulation of NOD1 via a HSP90 chaperone complex. In vitro, has intrinsic chaperone activity. This function may be achieved by inhibiting association of ROCK2 with NPM1. Plays a role in ensuring the localization of the tyrosine kinase receptor EGFR to the plasma membrane, and thus ensures the subsequent regulation of EGFR activity and EGF-induced actin cytoskeleton remodeling. Involved in stress response. Prevents tumorigenesis. This chain is Cysteine and histidine-rich domain-containing protein 1 (Chordc1), found in Rattus norvegicus (Rat).